The chain runs to 914 residues: DNA mismatch repair protein MutS (914 aa).

Positions 1–24 (MDNKTDNKNNLTPQSAPSSAPHKE) are disordered. Residues 8-18 (KNNLTPQSAPS) show a composition bias toward polar residues. 662 to 669 (GPNMGGKS) is an ATP binding site.

This sequence belongs to the DNA mismatch repair MutS family.

In terms of biological role, this protein is involved in the repair of mismatches in DNA. It is possible that it carries out the mismatch recognition step. This protein has a weak ATPase activity. The sequence is that of DNA mismatch repair protein MutS from Bartonella henselae (strain ATCC 49882 / DSM 28221 / CCUG 30454 / Houston 1) (Rochalimaea henselae).